The primary structure comprises 1412 residues: MELEEVGVEANQPNNDQGSKKQNKNKDKKVKKEKKIGYGGKKSAEENSNFISWLTFSWADRFVVHCFRHVLQLSHIWDLASYDKSAYLAEKIAISWDVEIKKPKPSYIRAAFRAFGLYFVLSWFFYAIYAASQFVGPEILKRMVTFVLKSRSGISTEDPNMGYYYALIMFGSAMIGSVCLYQSNMISARTGDRLRSVIVLDVYRKAIKLSNSARANTSPGEIVNLMSNDAQRMVEVFQLVNNGVFALPQIIVCLALLYRAIGWPTFVGLGLMLAAVPFNGIAAKKLTEIRRHLVGFTDKRVKTTNEILQAIKIIKLYAWEDSFAKKVIERREAEIKLLFSFSRYRAMLIVIVAALPTAVSVLVFSSYYGYYKKLDAGEIFAALSYLNILRLPLGFLPIIVALGIQMKIAAQRVTDFLLLPEMKEISKIEDPSIENGIYIRDATLTWNQEKKEESFTLKNINFEAKGKTLTMIVGSVGSGKSSLIQAMLGEMDVLDGSVAMKGNVAYVPQQAWIINATLKDNILFGSPYDEAKYRKVLEVCALERDIELFPQGDLVEIGERGVNLSGGQKQRVSIARAVYSDSDVYILDDPLSAVDAHVGKHLFHRCFKGILKSKTVILAANQLNYLPFAHNTVVLKAGEISERGSYQQLINAQKEFSGLLQAYGVDESAVNEDVEDDKEIEESDNIVVEEKTKPTEKPKLQNKDGVLTSQEEREEGAVAMWVYWKYITVGGGFLFLMAFIFFLMDTGTRTFVDWWLSHWQNESTKNALAVAQGLEPSGLTDTQYLGIYIGVGMTSILISAGRNFLFFEYTVRASRALHHQLFNALLRAPMSFFDTTPLGRIINRFTRDLDGVDNLMATSISQFLVFFTTVVATLIIISIITPFLLVPLAPICIIFYFLQFFYRYTSRELQRLEAISRSPIFSHFSETLGGVVSIRAYRKKEENILTNQFRLDNNNKCYLTLQAMNQWLGLRLDLLANLVTFFACLFITIDRDTISAANVGLSLSYALSLTGNLNRATLQAADTETKMNSVERITHYIKGPVEALQIVEDHRPAPDWPPHGAITFDNLVMRYREGLDPVLKGISCEIKAKEKIGIVGRTGAGKSSIVLALFRLIEASEGAILIDGENIAKFGLKDLRRNLAIIPQDPVLFSGTLRENIDPFNEKTDDQLWSVLKDIQLHDVAKSLEGGLDSKVTENGDNWSVGQRQLLCLARALLRDPKILVLDEATASVDGHSDSLIQATIREKFSNCTILTIAHRLNTIMDSDRIIVLDAGKISEFDEPWTLLQNPAGLLNWLVEETGPQNAAYLRRLAQAKKDGVNIDQITPPISPTPEQKPFKNADIDNINSPPQQSLKAEDNPNPKALDNSGDNNNNNNNNNNNNNNNNNNNNNNNNNNNNNDNDNDNDNDNSEAGDN.

Residues 1 to 34 are disordered; it reads MELEEVGVEANQPNNDQGSKKQNKNKDKKVKKEK. The segment covering 21–34 has biased composition (basic residues); that stretch reads KQNKNKDKKVKKEK. A run of 6 helical transmembrane segments spans residues 115–135, 161–181, 236–256, 261–281, 346–366, and 379–399; these read FGLY…SQFV, MGYY…VCLY, VFQL…CLAL, IGWP…FNGI, AMLI…VFSS, and IFAA…LPII. Residues 119–405 enclose the ABC transmembrane type-1 1 domain; sequence FVLSWFFYAI…LPIIVALGIQ (287 aa). An ABC transporter 1 domain is found at 439–662; sequence IRDATLTWNQ…QKEFSGLLQA (224 aa). 474-481 is a binding site for ATP; sequence GSVGSGKS. 5 consecutive transmembrane segments (helical) span residues 724-744, 787-807, 854-874, 875-895, and 967-987; these read WKYI…FFLM, IYIG…FLFF, NLMA…VATL, IIIS…CIIF, and WLGL…CLFI. The 291-residue stretch at 735 to 1025 folds into the ABC transmembrane type-1 2 domain; it reads FLMAFIFFLM…ATLQAADTET (291 aa). The region spanning 1062-1296 is the ABC transporter 2 domain; that stretch reads ITFDNLVMRY…PAGLLNWLVE (235 aa). Position 1096–1103 (1096–1103) interacts with ATP; the sequence is GRTGAGKS. Positions 1316–1412 are disordered; the sequence is GVNIDQITPP…DNDNSEAGDN (97 aa). The segment covering 1342–1351 has biased composition (polar residues); that stretch reads NINSPPQQSL. The segment covering 1367 to 1397 has biased composition (low complexity); it reads DNNNNNNNNNNNNNNNNNNNNNNNNNNNNND. A compositionally biased stretch (acidic residues) spans 1398-1412; the sequence is NDNDNDNDNSEAGDN.

This sequence belongs to the ABC transporter superfamily. ABCC family. Conjugate transporter (TC 3.A.1.208) subfamily.

Its subcellular location is the membrane. This is ABC transporter C family member 3 (abcC3) from Dictyostelium discoideum (Social amoeba).